Here is a 1907-residue protein sequence, read N- to C-terminus: Receptor-type tyrosine-protein phosphatase S (1907 aa).

An N-terminal signal peptide occupies residues 1 to 29; the sequence is MAPTWSPSVVSVVGPVGLFLVLLARGCLA. At 30–1257 the chain is on the extracellular side; sequence EEPPRFIREP…PQPIVDGEEG (1228 aa). 3 Ig-like C2-type domains span residues 33-123, 135-224, and 232-314; these read PRFI…AKLT, PNID…ANLY, and PRFS…AQIT. Cystine bridges form between Cys-54–Cys-107 and Cys-156–Cys-207. The tract at residues 68 to 72 is important for binding to glycosaminoglycan chains; it reads KKGKK. Asn-250 and Asn-295 each carry an N-linked (GlcNAc...) asparagine glycan. A disulfide bond links Cys-253 and Cys-298. Fibronectin type-III domains lie at 321-411, 416-510, 514-603, 608-705, 710-809, 810-906, 907-1008, and 1011-1095; these read APGT…TGEQ, APRN…TQQG, QPMN…TLQA, PPQD…TDED, PPRK…TKGA, VLGR…APRG, FPQI…LARD, and SPKN…TAFN. The segment covering 691-700 has biased composition (low complexity); that stretch reads PGPESSPVVV. A disordered region spans residues 691 to 711; the sequence is PGPESSPVVVRTDEDVPSAPP. Asn-720 is a glycosylation site (N-linked (GlcNAc...) asparagine). A glycan (N-linked (GlcNAc...) asparagine) is linked at Asn-916. A helical transmembrane segment spans residues 1258 to 1278; it reads LIWVIGPVLAVVFIICIVIAI. At 1279-1907 the chain is on the cytoplasmic side; the sequence is LLYKNKPDSK…YLGSFDHYAT (629 aa). The segment covering 1286–1296 has biased composition (basic and acidic residues); it reads DSKRKDSEPRT. Residues 1286-1313 form a disordered region; it reads DSKRKDSEPRTKCLLNNADLAPHHPKDP. 2 consecutive Tyrosine-protein phosphatase domains span residues 1352–1607 and 1639–1898; these read LSQE…LLEA and MELE…ALEY. Substrate-binding positions include Asp-1516, 1548–1554, and Gln-1592; that span reads CSAGVGR. Cys-1548 functions as the Phosphocysteine intermediate in the catalytic mechanism. Cys-1839 acts as the Phosphocysteine intermediate in catalysis.

It belongs to the protein-tyrosine phosphatase family. Receptor class 2A subfamily. Binding to large heparan sulfate proteoglycan structures promotes oligomerization. Binding to chondroitin sulfate proteoglycan does not lead to oligomerization. Interacts (via Ig-like domains) with NTRK3. Interacts (via Ig-like domains) with NTRK1, but does not form detectable complexes with NTRK2. Interacts with PPFIA1, PPFIA2 and PPFIA3. In terms of processing, a cleavage occurs, separating the extracellular domain from the transmembrane segment. This process called 'ectodomain shedding' is thought to be involved in receptor desensitization, signal transduction and/or membrane localization. As to expression, detected in brain cortex, cerebellum and thoracic spinal cord (at protein level). Detected in motor cortex and white matter of the spinal cord, but not in spinal cord gray matter. Isoform 1 and isoform 6 are predominantly expressed in the brain (cerebrum and cerebellum) and to a lesser extent in the heart and skeletal muscle. Also found in neuronal-derived cell lines. Detected in the ganglion cell layer of the retina and in glial cells along the optic nerve. Detected in bone marrow and spleen plasmacytoid dendritic cells.

It is found in the cell membrane. The protein localises to the cell projection. Its subcellular location is the axon. The protein resides in the perikaryon. It localises to the cytoplasmic vesicle. It is found in the secretory vesicle. The protein localises to the synaptic vesicle membrane. Its subcellular location is the synapse. The protein resides in the synaptosome. It localises to the postsynaptic density. It is found in the neuron projection. The protein localises to the growth cone. It catalyses the reaction O-phospho-L-tyrosyl-[protein] + H2O = L-tyrosyl-[protein] + phosphate. In terms of biological role, cell surface receptor that binds to glycosaminoglycans, including chondroitin sulfate proteoglycans and heparan sulfate proteoglycans. Binding to chondroitin sulfate and heparan sulfate proteoglycans has opposite effects on PTPRS oligomerization and regulation of neurite outgrowth. Contributes to the inhibition of neurite and axonal outgrowth by chondroitin sulfate proteoglycans, also after nerve transection. Plays a role in stimulating neurite outgrowth in response to the heparan sulfate proteoglycan GPC2. Required for normal brain development, especially for normal development of the pituitary gland and the olfactory bulb. Functions as a tyrosine phosphatase. Mediates dephosphorylation of NTRK1, NTRK2 and NTRK3. Plays a role in down-regulation of signaling cascades that lead to the activation of Akt and MAP kinases. Down-regulates TLR9-mediated activation of NF-kappa-B, as well as production of TNF, interferon alpha and interferon beta. This is Receptor-type tyrosine-protein phosphatase S (Ptprs) from Mus musculus (Mouse).